A 185-amino-acid polypeptide reads, in one-letter code: ATP-dependent protease subunit HslV (185 aa).

Thr-13 is a catalytic residue. 3 residues coordinate Na(+): Gly-167, Cys-170, and Thr-173.

It belongs to the peptidase T1B family. HslV subfamily. A double ring-shaped homohexamer of HslV is capped on each side by a ring-shaped HslU homohexamer. The assembly of the HslU/HslV complex is dependent on binding of ATP.

The protein localises to the cytoplasm. It catalyses the reaction ATP-dependent cleavage of peptide bonds with broad specificity.. With respect to regulation, allosterically activated by HslU binding. In terms of biological role, protease subunit of a proteasome-like degradation complex believed to be a general protein degrading machinery. This Sinorhizobium medicae (strain WSM419) (Ensifer medicae) protein is ATP-dependent protease subunit HslV.